The sequence spans 335 residues: Ketol-acid reductoisomerase (NADP(+)) (335 aa).

One can recognise a KARI N-terminal Rossmann domain in the interval 1–182; the sequence is MATIIYDNET…GATRAGVYET (182 aa). NADP(+)-binding positions include 25 to 28, arginine 48, serine 51, serine 53, and 83 to 86; these read YGSQ and DEKQ. Histidine 108 is a catalytic residue. An NADP(+)-binding site is contributed by glycine 134. The KARI C-terminal knotted domain maps to 183 to 328; it reads TFREETETDL…KEIRANIPWL (146 aa). Mg(2+)-binding residues include aspartate 191, glutamate 195, glutamate 227, and glutamate 231. Position 252 (serine 252) interacts with substrate.

The protein belongs to the ketol-acid reductoisomerase family. Requires Mg(2+) as cofactor.

It carries out the reaction (2R)-2,3-dihydroxy-3-methylbutanoate + NADP(+) = (2S)-2-acetolactate + NADPH + H(+). The catalysed reaction is (2R,3R)-2,3-dihydroxy-3-methylpentanoate + NADP(+) = (S)-2-ethyl-2-hydroxy-3-oxobutanoate + NADPH + H(+). Its pathway is amino-acid biosynthesis; L-isoleucine biosynthesis; L-isoleucine from 2-oxobutanoate: step 2/4. It participates in amino-acid biosynthesis; L-valine biosynthesis; L-valine from pyruvate: step 2/4. Its function is as follows. Involved in the biosynthesis of branched-chain amino acids (BCAA). Catalyzes an alkyl-migration followed by a ketol-acid reduction of (S)-2-acetolactate (S2AL) to yield (R)-2,3-dihydroxy-isovalerate. In the isomerase reaction, S2AL is rearranged via a Mg-dependent methyl migration to produce 3-hydroxy-3-methyl-2-ketobutyrate (HMKB). In the reductase reaction, this 2-ketoacid undergoes a metal-dependent reduction by NADPH to yield (R)-2,3-dihydroxy-isovalerate. This is Ketol-acid reductoisomerase (NADP(+)) from Methanosarcina acetivorans (strain ATCC 35395 / DSM 2834 / JCM 12185 / C2A).